We begin with the raw amino-acid sequence, 1134 residues long: Tetrathionate reductase subunit A (1134 aa).

Residues 1-31 (MQLSRRDFIKGLVAVGSASVFLAGYSETVDR) constitute a signal peptide (tat-type signal). The region spanning 46 to 133 (GRIVHSACLG…DGIHYLYDPY (88 aa)) is the 4Fe-4S Mo/W bis-MGD-type domain. [4Fe-4S] cluster contacts are provided by cysteine 53, cysteine 56, cysteine 60, and cysteine 119.

It belongs to the prokaryotic molybdopterin-containing oxidoreductase family. Probably composed of three subunits: TtrA, TtrB and TtrC. Precursor interacts with TtrD. Requires [4Fe-4S] cluster as cofactor. The cofactor is Mo-bis(molybdopterin guanine dinucleotide). Exported by the Tat system. The position of the signal peptide cleavage has not been experimentally proven.

The protein localises to the cell membrane. Part of a membrane-bound tetrathionate reductase that catalyzes the reduction of tetrathionate to thiosulfate. TtrA is the catalytic subunit. The protein is Tetrathionate reductase subunit A (ttrA) of Archaeoglobus fulgidus (strain ATCC 49558 / DSM 4304 / JCM 9628 / NBRC 100126 / VC-16).